The following is a 327-amino-acid chain: PDZ and LIM domain protein 1 (327 aa).

Thr2 is modified (N-acetylthreonine). Positions 3–85 (TQQIVLQGPG…NMTLTVSRSE (83 aa)) constitute a PDZ domain. Phosphoserine is present on residues Ser90 and Ser130. Tyr142 carries the phosphotyrosine modification. Residues 161–184 (VESKTSASGEEANSRPVVQPHPSG) are disordered. Residues 256 to 315 (PICDKCGTGIVGVFVKLRDHHRHPECYVCTDCGINLKQKGHFFVEDQIYCEKHARERVTP) form the LIM zinc-binding domain. 8 residues coordinate Zn(2+): Cys258, Cys261, His278, Cys281, Cys284, Cys287, Cys305, and His308. Thr314 is modified (phosphothreonine). Tyr319 carries the post-translational modification Phosphotyrosine.

Interacts with ACTN1, ACTN2 and ACTN4. Interacts with PDLIM4. In terms of tissue distribution, expressed in heart, lung, spleen, testis and skeletal muscle.

The protein resides in the cytoplasm. Its subcellular location is the cytoskeleton. The protein localises to the myofibril. It localises to the sarcomere. It is found in the z line. In terms of biological role, cytoskeletal protein that may act as an adapter that brings other proteins (like kinases) to the cytoskeleton. Involved in assembly, disassembly and directioning of stress fibers in fibroblasts. Required for the localization of ACTN1 and PALLD to stress fibers. Required for cell migration and in maintaining cell polarity of fibroblasts. The polypeptide is PDZ and LIM domain protein 1 (Pdlim1) (Mus musculus (Mouse)).